We begin with the raw amino-acid sequence, 529 residues long: Peptide chain release factor 3 (529 aa).

In terms of domain architecture, tr-type G spans 11 to 280 (SKRRTFAIIS…GLTDWAPAPL (270 aa)). GTP-binding positions include 20-27 (SHPDAGKT), 88-92 (DTPGH), and 142-145 (NKLD).

It belongs to the TRAFAC class translation factor GTPase superfamily. Classic translation factor GTPase family. PrfC subfamily.

Its subcellular location is the cytoplasm. In terms of biological role, increases the formation of ribosomal termination complexes and stimulates activities of RF-1 and RF-2. It binds guanine nucleotides and has strong preference for UGA stop codons. It may interact directly with the ribosome. The stimulation of RF-1 and RF-2 is significantly reduced by GTP and GDP, but not by GMP. This chain is Peptide chain release factor 3, found in Vibrio vulnificus (strain CMCP6).